Consider the following 29-residue polypeptide: Cytochrome b6-f complex subunit 8 (29 aa).

The helical transmembrane segment at 3–23 (IISLAWAALMVVFTFSLSLVV) threads the bilayer.

This sequence belongs to the PetN family. In terms of assembly, the 4 large subunits of the cytochrome b6-f complex are cytochrome b6, subunit IV (17 kDa polypeptide, PetD), cytochrome f and the Rieske protein, while the 4 small subunits are PetG, PetL, PetM and PetN. The complex functions as a dimer.

It localises to the plastid. It is found in the chloroplast thylakoid membrane. Functionally, component of the cytochrome b6-f complex, which mediates electron transfer between photosystem II (PSII) and photosystem I (PSI), cyclic electron flow around PSI, and state transitions. This chain is Cytochrome b6-f complex subunit 8, found in Nicotiana tomentosiformis (Tobacco).